Reading from the N-terminus, the 100-residue chain is Conantokin-G (100 aa).

Residues 1–21 (MHLYTYLYLLVPLVTFHLILG) form the signal peptide. A propeptide spanning residues 22-80 (TGTLDDGGALTERRSADATALKAEPVLLQKSAARSTDDNGKDRLTQMKRILKQRGNKAR) is cleaved from the precursor. Residues 52–100 (SAARSTDDNGKDRLTQMKRILKQRGNKARGEEELQENQELIREKSNGKR) are disordered. Residues 56-66 (STDDNGKDRLT) are compositionally biased toward basic and acidic residues. The interval 61-80 (GKDRLTQMKRILKQRGNKAR) is gamma-carboxylation recognition sequence that plays a role in the conversion of Glu to carboxy-Glu (Gla). A divalent metal cation is bound at residue E83. Residues E83, E84, E87, E90, and E94 each carry the 4-carboxyglutamate modification. 3 residues coordinate a divalent metal cation: E87, E90, and E94. Residues 90–100 (ELIREKSNGKR) show a composition bias toward basic and acidic residues. The residue at position 97 (N97) is an Asparagine amide.

Belongs to the conotoxin B superfamily. It depends on Ca(2+) as a cofactor. Mg(2+) serves as cofactor. In terms of tissue distribution, expressed by the venom duct.

The protein resides in the secreted. Functionally, conantokins inhibit N-methyl-D-aspartate (NMDA) receptors. This toxin is selective for the NR2B/GRIN2B subunit. Induces sleep-like symptoms in young mice and hyperactivity in older mice. This Conus geographus (Geography cone) protein is Conantokin-G.